The following is a 76-amino-acid chain: MSFGFPTFSQNRFTEQYSGLCPIAPGRGAGLQPCRRDCPVARWLVADHPVFGSDCRCRMMVGVNRVRIGRHELTGA.

In terms of assembly, physically interacts with histone H3 in infected macrophages.

The protein localises to the secreted. It is found in the host cytoplasm. Its subcellular location is the host nucleus. It carries out the reaction L-lysyl-[protein] + acetyl-CoA = N(6)-acetyl-L-lysyl-[protein] + CoA + H(+). Its activity is regulated as follows. Is completely inhibited by anacardic acid, an inhibitor of HAT activity. Functionally, histone acetyltransferase, which by binding to the host chromatin, may manipulate the expression of host genes involved in anti-inflammatory responses to evade clearance and to survive in the intracellular milieu. Acetylates histone H3 at the 'Lys-9' and 'Lys-14' positions. The protein is Histone acetyltransferase of Mycobacterium tuberculosis (strain CDC 1551 / Oshkosh).